Reading from the N-terminus, the 162-residue chain is UPF0262 protein Acry_0160 (162 aa).

The protein belongs to the UPF0262 family.

The sequence is that of UPF0262 protein Acry_0160 from Acidiphilium cryptum (strain JF-5).